The chain runs to 400 residues: Pyruvate dehydrogenase E1 component subunit beta-4, chloroplastic (400 aa).

The disordered stretch occupies residues 1–34 (MAAASSLHAAPRVGSSSSFSSSSSAGRRSASAAR). Residues 1–57 (MAAASSLHAAPRVGSSSSFSSSSSAGRRSASAARSVRVAAAAGSCAARRAGGRMVAR) constitute a chloroplast transit peptide. Low complexity predominate over residues 9–34 (AAPRVGSSSSFSSSSSAGRRSASAAR). Position 136 (Glu-136) interacts with thiamine diphosphate. 4 residues coordinate K(+): Ile-189, Ala-237, Ile-238, and Asn-242.

In terms of assembly, tetramer of 2 alpha and 2 beta subunits. The cofactor is thiamine diphosphate.

It is found in the plastid. Its subcellular location is the chloroplast. The catalysed reaction is N(6)-[(R)-lipoyl]-L-lysyl-[protein] + pyruvate + H(+) = N(6)-[(R)-S(8)-acetyldihydrolipoyl]-L-lysyl-[protein] + CO2. Its function is as follows. The pyruvate dehydrogenase complex catalyzes the overall conversion of pyruvate to acetyl-CoA and CO(2). It contains multiple copies of three enzymatic components: pyruvate dehydrogenase (E1), dihydrolipoamide acetyltransferase (E2) and lipoamide dehydrogenase (E3). The polypeptide is Pyruvate dehydrogenase E1 component subunit beta-4, chloroplastic (Oryza sativa subsp. japonica (Rice)).